The sequence spans 248 residues: ATP synthase subunit a, chloroplastic (248 aa).

5 helical membrane passes run 37 to 57 (AQVLITSWIVIAILLGLAILA), 96 to 116 (VPFIGTMFLFIFVSNWSGALL), 134 to 154 (DINTTVALALPTSVAYFYAGL), 200 to 220 (LVVAVPISLVPLVVPIPMMFL), and 221 to 241 (GLFTSAIQALIFATLAAAYIG).

The protein belongs to the ATPase A chain family. As to quaternary structure, F-type ATPases have 2 components, CF(1) - the catalytic core - and CF(0) - the membrane proton channel. CF(1) has five subunits: alpha(3), beta(3), gamma(1), delta(1), epsilon(1). CF(0) has four main subunits: a, b, b' and c.

The protein resides in the plastid. It localises to the chloroplast thylakoid membrane. In terms of biological role, key component of the proton channel; it plays a direct role in the translocation of protons across the membrane. This chain is ATP synthase subunit a, chloroplastic, found in Anthoceros angustus (Hornwort).